A 226-amino-acid chain; its full sequence is UPF0502 protein Gbem_0194 (226 aa).

This sequence belongs to the UPF0502 family.

This is UPF0502 protein Gbem_0194 from Citrifermentans bemidjiense (strain ATCC BAA-1014 / DSM 16622 / JCM 12645 / Bem) (Geobacter bemidjiensis).